The following is a 203-amino-acid chain: ATP-dependent Clp protease proteolytic subunit (203 aa).

Ser100 (nucleophile) is an active-site residue. The active site involves His125.

It belongs to the peptidase S14 family. As to quaternary structure, component of the chloroplastic Clp protease core complex.

It is found in the plastid. The protein resides in the chloroplast stroma. The enzyme catalyses Hydrolysis of proteins to small peptides in the presence of ATP and magnesium. alpha-casein is the usual test substrate. In the absence of ATP, only oligopeptides shorter than five residues are hydrolyzed (such as succinyl-Leu-Tyr-|-NHMec, and Leu-Tyr-Leu-|-Tyr-Trp, in which cleavage of the -Tyr-|-Leu- and -Tyr-|-Trp bonds also occurs).. In terms of biological role, cleaves peptides in various proteins in a process that requires ATP hydrolysis. Has a chymotrypsin-like activity. Plays a major role in the degradation of misfolded proteins. The protein is ATP-dependent Clp protease proteolytic subunit of Dioscorea elephantipes (Elephant's foot yam).